We begin with the raw amino-acid sequence, 142 residues long: Hemoglobin larval subunit alpha (142 aa).

The 141-residue stretch at 2–142 folds into the Globin domain; the sequence is VLSAEEKALV…VSAVLTSKYR (141 aa). H59 contributes to the O2 binding site. H88 provides a ligand contact to heme b.

Belongs to the globin family. In terms of assembly, heterotetramer of two alpha chains and two beta chains. Red blood cells.

Functionally, involved in oxygen transport from the lung to the various peripheral tissues. The polypeptide is Hemoglobin larval subunit alpha (Pleurodeles waltl (Iberian ribbed newt)).